A 445-amino-acid chain; its full sequence is 6-phosphogluconate dehydrogenase, decarboxylating (445 aa).

NADP(+) contacts are provided by residues 1 to 4, 22 to 24, 63 to 65, and N91; these read AVMG, NRS, and VKA. Substrate contacts are provided by residues N91 and 117 to 119; that span reads SGG. The Proton acceptor role is filled by K172. Residue 175-176 participates in substrate binding; sequence HN. E179 functions as the Proton donor in the catalytic mechanism. Y180, K249, R276, R434, and H440 together coordinate substrate.

Belongs to the 6-phosphogluconate dehydrogenase family. In terms of assembly, homodimer.

The enzyme catalyses 6-phospho-D-gluconate + NADP(+) = D-ribulose 5-phosphate + CO2 + NADPH. It participates in carbohydrate degradation; pentose phosphate pathway; D-ribulose 5-phosphate from D-glucose 6-phosphate (oxidative stage): step 3/3. Its function is as follows. Catalyzes the oxidative decarboxylation of 6-phosphogluconate to ribulose 5-phosphate and CO(2), with concomitant reduction of NADP to NADPH. The chain is 6-phosphogluconate dehydrogenase, decarboxylating (gnd) from Shigella sonnei.